The primary structure comprises 320 residues: Rhomboid-like protein 17, chloroplastic (320 aa).

A chloroplast-targeting transit peptide spans Met-1–Arg-87. 5 consecutive transmembrane segments (helical) span residues Trp-116–Thr-136, Leu-160–Ile-180, Leu-199–Ala-219, Met-247–Leu-267, and Ile-295–Ile-315.

It belongs to the peptidase S54 family.

The protein localises to the plastid. It is found in the chloroplast membrane. Probable rhomboid-type serine protease that catalyzes intramembrane proteolysis. This is Rhomboid-like protein 17, chloroplastic from Arabidopsis thaliana (Mouse-ear cress).